The chain runs to 235 residues: Small ribosomal subunit protein uS3 (235 aa).

Residues 39–107 (IREILHKELK…DVVINIVEIR (69 aa)) enclose the KH type-2 domain. Positions 215–235 (QDKRMAESDGGGSSRPRRDAA) are disordered.

Belongs to the universal ribosomal protein uS3 family. In terms of assembly, part of the 30S ribosomal subunit. Forms a tight complex with proteins S10 and S14.

Binds the lower part of the 30S subunit head. Binds mRNA in the 70S ribosome, positioning it for translation. This Rhodopseudomonas palustris (strain TIE-1) protein is Small ribosomal subunit protein uS3.